The primary structure comprises 320 residues: uncharacterized protein (320 aa).

Positions 1-26 form a coiled coil; it reads MNHYDQYQKYKKKYLDLKNQLNNSSQ.

The protein localises to the virion. This is an uncharacterized protein from Acanthamoeba polyphaga mimivirus (APMV).